Consider the following 523-residue polypeptide: Glycerate kinase (523 aa).

A Phosphoserine modification is found at Ser-60. Lys-200 carries the N6-acetyllysine modification.

It belongs to the glycerate kinase type-2 family.

It localises to the cytoplasm. It catalyses the reaction (R)-glycerate + ATP = (2R)-3-phosphoglycerate + ADP + H(+). This chain is Glycerate kinase (GLYCTK), found in Bos taurus (Bovine).